Consider the following 332-residue polypeptide: Protein EXORDIUM-like 6 (332 aa).

The first 27 residues, 1–27 (MAMASASSSSSSISVIIFLLLAPLCLS), serve as a signal peptide directing secretion. N-linked (GlcNAc...) asparagine glycosylation is found at N36, N102, and N143.

This sequence belongs to the EXORDIUM family.

The protein localises to the secreted. It is found in the extracellular space. Its subcellular location is the apoplast. May play a role in a brassinosteroid-dependent regulation of growth and development. The polypeptide is Protein EXORDIUM-like 6 (EXL6) (Arabidopsis thaliana (Mouse-ear cress)).